The primary structure comprises 437 residues: Adenylosuccinate synthetase (437 aa).

GTP-binding positions include Gly12 to Lys18 and Gly40 to Thr42. Catalysis depends on Asp13, which acts as the Proton acceptor. Positions 13 and 40 each coordinate Mg(2+). Residues Asp13–Lys16, Asn38–His41, Thr128, Arg142, Gln223, Thr238, and Arg302 each bind IMP. The active-site Proton donor is the His41. Thr298–Arg304 serves as a coordination point for substrate. GTP is bound by residues Arg304, Lys330–Asp332, and Ser412–Gly414.

Belongs to the adenylosuccinate synthetase family. Homodimer. The cofactor is Mg(2+).

The protein localises to the cytoplasm. It carries out the reaction IMP + L-aspartate + GTP = N(6)-(1,2-dicarboxyethyl)-AMP + GDP + phosphate + 2 H(+). The protein operates within purine metabolism; AMP biosynthesis via de novo pathway; AMP from IMP: step 1/2. Functionally, plays an important role in the de novo pathway of purine nucleotide biosynthesis. Catalyzes the first committed step in the biosynthesis of AMP from IMP. The polypeptide is Adenylosuccinate synthetase (Prochlorococcus marinus (strain MIT 9313)).